The primary structure comprises 512 residues: Podocan-like protein 1 (512 aa).

The signal sequence occupies residues 1–26 (MAESGLAMWPSLLLLLLLPGPPPVAG). Residues 37–74 (ESLQPLPRACPLRCSCPRVDTVDCDGLDLRVFPDNITR) form the LRRNT domain. N71 carries an N-linked (GlcNAc...) asparagine glycan. LRR repeat units follow at residues 75–96 (AAQHLSLQNNQLQELPYNELSR), 99–119 (GLRTLNLHNNLISSEGLPDEA), 125–146 (QLQHLCVAHNKLSVAPQFLPRS), 147–167 (LRVADLAANQVMEIFPLTFGE), 170–193 (ALRSVYLHNNQLSNAGLPPDAFRG), 196–216 (AIATLSLSNNQLSYLPPSLPP), 217–238 (SLERLHLQNNLISKVPRGALSR), 241–261 (QLRELYLQHNQLTDSGLDATT), 267–288 (SLEYLDLSHNQLTTVPAGLPRT), 289–309 (LAILHLGRNRIRQVEAARLHG), 312–332 (GLRYLLLQHNQLGSSGLPAGA), 338–359 (GLHTLHLYGNGLDRVPPALPRR), 360–380 (LRALVLPHNHVAALGARDLVA), 383–396 (GLTELNLAYNRLAS), 409–430 (ALRSLDLAGNQLTRLPMGLPTG), 431–451 (LRTLQLQRNQLRMLEPEPLAG), and 454–474 (QLRELSLAHNRLRVGDIGPGT).

Belongs to the small leucine-rich proteoglycan (SLRP) family. SLRP class V subfamily. In terms of processing, N-glycosylated.

It localises to the secreted. The protein resides in the extracellular space. Its subcellular location is the extracellular matrix. The protein is Podocan-like protein 1 (PODNL1) of Homo sapiens (Human).